We begin with the raw amino-acid sequence, 220 residues long: ATP phosphoribosyltransferase (220 aa).

Belongs to the ATP phosphoribosyltransferase family. Short subfamily. As to quaternary structure, heteromultimer composed of HisG and HisZ subunits.

It localises to the cytoplasm. The catalysed reaction is 1-(5-phospho-beta-D-ribosyl)-ATP + diphosphate = 5-phospho-alpha-D-ribose 1-diphosphate + ATP. The protein operates within amino-acid biosynthesis; L-histidine biosynthesis; L-histidine from 5-phospho-alpha-D-ribose 1-diphosphate: step 1/9. Functionally, catalyzes the condensation of ATP and 5-phosphoribose 1-diphosphate to form N'-(5'-phosphoribosyl)-ATP (PR-ATP). Has a crucial role in the pathway because the rate of histidine biosynthesis seems to be controlled primarily by regulation of HisG enzymatic activity. The protein is ATP phosphoribosyltransferase of Anaeromyxobacter sp. (strain Fw109-5).